The sequence spans 278 residues: Large ribosomal subunit protein uL2 (278 aa).

Residues 201 to 278 (HGNINDGKAG…IMRSRHQKKK (78 aa)) form a disordered region. A compositionally biased stretch (basic residues) spans 210-221 (GRSRWRGKRPHV).

It belongs to the universal ribosomal protein uL2 family. In terms of assembly, part of the 50S ribosomal subunit. Forms a bridge to the 30S subunit in the 70S ribosome.

In terms of biological role, one of the primary rRNA binding proteins. Required for association of the 30S and 50S subunits to form the 70S ribosome, for tRNA binding and peptide bond formation. It has been suggested to have peptidyltransferase activity; this is somewhat controversial. Makes several contacts with the 16S rRNA in the 70S ribosome. In Allorhizobium ampelinum (strain ATCC BAA-846 / DSM 112012 / S4) (Agrobacterium vitis (strain S4)), this protein is Large ribosomal subunit protein uL2.